A 712-amino-acid chain; its full sequence is Polyribonucleotide nucleotidyltransferase (712 aa).

Residues Asp-488 and Asp-494 each contribute to the Mg(2+) site. The KH domain maps to 555–614 (PKIETINIPTDKIREVIGSGGKVIREIVATTGAKVDINDDGVVKVSASDGAKIKAAIDWI). The 69-residue stretch at 624 to 692 (GKIYDGKVVK…DRGKTKLSMK (69 aa)) folds into the S1 motif domain.

Belongs to the polyribonucleotide nucleotidyltransferase family. The cofactor is Mg(2+).

The protein resides in the cytoplasm. The catalysed reaction is RNA(n+1) + phosphate = RNA(n) + a ribonucleoside 5'-diphosphate. Involved in mRNA degradation. Catalyzes the phosphorolysis of single-stranded polyribonucleotides processively in the 3'- to 5'-direction. This Caulobacter vibrioides (strain NA1000 / CB15N) (Caulobacter crescentus) protein is Polyribonucleotide nucleotidyltransferase.